The following is a 236-amino-acid chain: Ubiquitin carboxyl-terminal hydrolase YUH1 (236 aa).

One can recognise a UCH catalytic domain in the interval 7 to 233 (AVVPIESNPE…LNFAMLGLGP (227 aa)). The segment at 10–15 (PIESNP) is interaction with ubiquitin. Catalysis depends on C90, which acts as the Nucleophile. Residues 149–157 (FSTGQSEAP) form an interaction with ubiquitin region. H166 serves as the catalytic Proton donor. Residues 219–228 (NEEDVLNFAM) are interaction with ubiquitin.

The protein belongs to the peptidase C12 family.

The catalysed reaction is Thiol-dependent hydrolysis of ester, thioester, amide, peptide and isopeptide bonds formed by the C-terminal Gly of ubiquitin (a 76-residue protein attached to proteins as an intracellular targeting signal).. Deubiquitinating enzyme (DUB) that controls levels of cellular ubiquitin through processing of ubiquitin precursors and ubiquitinated proteins. Thiol protease that recognizes and hydrolyzes a peptide bond at the C-terminal glycine of either ubiquitin or RUB1. Preferentially cleaves ubiquitin from peptides and small adducts. The polypeptide is Ubiquitin carboxyl-terminal hydrolase YUH1 (YUH1) (Saccharomyces cerevisiae (strain ATCC 204508 / S288c) (Baker's yeast)).